The primary structure comprises 615 residues: MFS-type transporter 1 (615 aa).

The tract at residues 1-85 (MTALAAVPDL…GNNVSPHGRH (85 aa)) is disordered. A compositionally biased stretch (polar residues) spans 16–53 (PSTTTVHSPNYSGSPADISSSPTTRAVSRNTARQTASA). N-linked (GlcNAc...) asparagine glycosylation is present at Asn25. The next 6 helical transmembrane spans lie at 94–114 (CLVIATLSGVSFLNTMGSGIL), 138–158 (VYSLAAGCTLLVFGAVGHIIG), 162–182 (VWITGACLYAAFTLGVGRSAT), 192–212 (VLGVSIAMCLPTAVSLTTNGF), 222–242 (FAFQGMGQPLGYSTGLILGGI), and 251–271 (FGFYISGGINAVLAICALVVL). A glycan (N-linked (GlcNAc...) asparagine) is linked at Asn302. The next 8 helical transmembrane spans lie at 320–340 (WTGTLAISASMGFLSYVFSVV), 351–371 (QNIALLVAAALLLPTFTLWVG), 397–417 (AAVFFTWAVFNAFQYFSALYF), 432–452 (FLPMVLVGAATNIVTGYLVET), 455–475 (VRWLVVVSAIFSLFSPLIMAL), 488–508 (FAMLLSPLHPDVLFTVSNLII), 522–542 (AVFNAVSQVGNSVGLGLTAVV), and 585–605 (AAFWLMFGAAALVTVITFLGL).

The protein belongs to the major facilitator superfamily. EmrB family.

It localises to the membrane. Its function is as follows. MFS-type transporter; part of the gene cluster that mediates the biosynthesis of pyriculol and pyriculariol, two heptaketides that induce lesion formation upon application on rice leaves but are dispensable for pathogenicity. With the ABC transporter ABC7, is most likely responsible for pyriculol and pyriculariol secretion and thereby may contribute to intrinsic resistance. The protein is MFS-type transporter 1 of Pyricularia oryzae (strain 70-15 / ATCC MYA-4617 / FGSC 8958) (Rice blast fungus).